A 261-amino-acid polypeptide reads, in one-letter code: Follistatin-related protein 3 (261 aa).

Positions 1 to 26 (MRPRAPGPLWPLPWGALAWAVGFVGS) are cleaved as a signal peptide. The TB domain maps to 36–107 (GVCWLQQGRE…SCEGVECGPG (72 aa)). Disulfide bonds link Cys38–Cys61, Cys48–Cys92, Cys62–Cys95, Cys99–Cys110, Cys104–Cys119, Cys121–Cys153, Cys125–Cys146, and Cys135–Cys167. Asn73 is a glycosylation site (N-linked (GlcNAc...) asparagine). A Follistatin-like 1 domain is found at 99–119 (CEGVECGPGKACRMLGGRPRC). Kazal-like domains follow at residues 113–169 (LGGR…RCRK) and 189–245 (SAHC…SCAG). Residues 170 to 193 (SCAHVVCLRPQSCVVDQTGSAHCV) form the Follistatin-like 2 domain. Intrachain disulfides connect Cys195-Cys229, Cys200-Cys222, and Cys211-Cys243. Asn215 carries N-linked (GlcNAc...) asparagine glycosylation. The tract at residues 242-261 (SCAGTPEPLDPESEEEENFV) is disordered. Residues 250–261 (LDPESEEEENFV) show a composition bias toward acidic residues.

As to quaternary structure, interacts with INHBA and INHBB. Interacts with FN1. Interacts with ADAM12. Interacts with MLLT10; the interaction enhances MLLT10 in vitro transcriptional activity and self-association. Interacts with MSTN.

Its subcellular location is the secreted. The protein resides in the nucleus. In terms of biological role, the secreted form is a binding and antagonizing protein for members of the TGF-beta family, such as activin, BMP2 and MSTN. Inhibits activin A-, activin B-, BMP2- and MSDT-induced cellular signaling; more effective on activin A than on activin B. Involved in bone formation; inhibits osteoclast differentiation. Involved in hematopoiesis; involved in differentiation of hemopoietic progenitor cells, increases hematopoietic cell adhesion to fibronectin and seems to contribute to the adhesion of hematopoietic precursor cells to the bone marrow stroma. The nuclear form is probably involved in transcriptional regulation via interaction with MLLT10. This chain is Follistatin-related protein 3 (FSTL3), found in Bos taurus (Bovine).